The primary structure comprises 243 residues: Venom protease (243 aa).

The region spanning valine 1–lysine 243 is the Peptidase S1 domain. Cysteine 34 and cysteine 50 are disulfide-bonded. Catalysis depends on charge relay system residues histidine 49 and aspartate 97. Cystine bridges form between cysteine 165/cysteine 178 and cysteine 189/cysteine 217. The active-site Charge relay system is the serine 193.

This sequence belongs to the peptidase S1 family. In terms of tissue distribution, expressed by the venom duct.

The protein resides in the secreted. The polypeptide is Venom protease (Bombus pensylvanicus (American bumblebee)).